Here is a 496-residue protein sequence, read N- to C-terminus: Myotilin (496 aa).

Residues 1–37 (MFNYERPKHFIQPQNPCGSRLQPPGPEVSGFPSQTKQ) form a disordered region. Arginine 20 carries the post-translational modification Omega-N-methylarginine. Residues 78-149 (PNPGQKVTAT…PTPKTPDHEI (72 aa)) form a necessary for interaction with ACTN1 region. 2 stretches are compositionally biased toward polar residues: residues 202-213 (NSDVQDSPQHNP) and 221-233 (PTSQVRSRSSSRA). The disordered stretch occupies residues 202-239 (NSDVQDSPQHNPEQARLHVPTSQVRSRSSSRAEANDQD). A necessary for interaction with FLNC region spans residues 213–491 (PEQARLHVPT…QRLAAQSGLY (279 aa)). A necessary for interaction with ACTA1 region spans residues 213-496 (PEQARLHVPT…QSGLYESEEL (284 aa)). 2 consecutive Ig-like C2-type domains span residues 248–333 (PRFI…ATFT) and 347–439 (PMFI…LDVT).

It belongs to the myotilin/palladin family. Homodimer. Interacts with ACTA1, ACTN1, FLNA, FLNB, FLNC, and MYOZ2. Interacts with the C-terminal region of MYOZ1. As to expression, expressed in skeletal muscle (at protein level).

The protein resides in the cell membrane. Its subcellular location is the sarcolemma. It is found in the cytoplasm. The protein localises to the cytoskeleton. It localises to the myofibril. The protein resides in the sarcomere. Its subcellular location is the z line. In terms of biological role, component of a complex of multiple actin cross-linking proteins. Involved in the control of myofibril assembly and stability at the Z lines in muscle cells. This chain is Myotilin (Myot), found in Mus musculus (Mouse).